The following is a 216-amino-acid chain: Probable GTP-binding protein EngB (216 aa).

The 175-residue stretch at serine 30–leucine 204 folds into the EngB-type G domain. Residues glycine 38–serine 45, glycine 64–leucine 68, aspartate 82–glycine 85, threonine 149–aspartate 152, and leucine 182–alanine 185 each bind GTP. Serine 45 and threonine 66 together coordinate Mg(2+).

It belongs to the TRAFAC class TrmE-Era-EngA-EngB-Septin-like GTPase superfamily. EngB GTPase family. Mg(2+) is required as a cofactor.

Its function is as follows. Necessary for normal cell division and for the maintenance of normal septation. This Ectopseudomonas mendocina (strain ymp) (Pseudomonas mendocina) protein is Probable GTP-binding protein EngB.